Reading from the N-terminus, the 154-residue chain is MGLSDGEWQLVLNAWGKVETDVAGHGQEVLIRLFTGHPETLEKFDKFKHLKTEAEMKASEDLKKHGNTVLTALGGILKKKGHHEAEVKHLAESHANKHKIPVKYLEFISDAIIHVLHDKHPSDFGADAQAAMSKALELFRNEMAAQYKVLGFHG.

Residues Gly-2–Lys-148 enclose the Globin domain. Position 4 is a phosphoserine (Ser-4). Residue His-65 participates in nitrite binding. His-65 is an O2 binding site. Thr-68 carries the phosphothreonine modification. Residue His-94 coordinates heme b.

In terms of assembly, monomeric.

Its subcellular location is the cytoplasm. The protein localises to the sarcoplasm. It catalyses the reaction Fe(III)-heme b-[protein] + nitric oxide + H2O = Fe(II)-heme b-[protein] + nitrite + 2 H(+). It carries out the reaction H2O2 + AH2 = A + 2 H2O. Functionally, monomeric heme protein which primary function is to store oxygen and facilitate its diffusion within muscle tissues. Reversibly binds oxygen through a pentacoordinated heme iron and enables its timely and efficient release as needed during periods of heightened demand. Depending on the oxidative conditions of tissues and cells, and in addition to its ability to bind oxygen, it also has a nitrite reductase activity whereby it regulates the production of bioactive nitric oxide. Under stress conditions, like hypoxia and anoxia, it also protects cells against reactive oxygen species thanks to its pseudoperoxidase activity. The polypeptide is Myoglobin (Bubalus bubalis (Domestic water buffalo)).